A 271-amino-acid polypeptide reads, in one-letter code: Tryptophan synthase alpha chain (271 aa).

Residues Glu-49 and Asp-60 each act as proton acceptor in the active site.

The protein belongs to the TrpA family. In terms of assembly, tetramer of two alpha and two beta chains.

It carries out the reaction (1S,2R)-1-C-(indol-3-yl)glycerol 3-phosphate + L-serine = D-glyceraldehyde 3-phosphate + L-tryptophan + H2O. It participates in amino-acid biosynthesis; L-tryptophan biosynthesis; L-tryptophan from chorismate: step 5/5. Functionally, the alpha subunit is responsible for the aldol cleavage of indoleglycerol phosphate to indole and glyceraldehyde 3-phosphate. This Burkholderia pseudomallei (strain K96243) protein is Tryptophan synthase alpha chain.